A 217-amino-acid polypeptide reads, in one-letter code: FGFR1 oncogene partner 2 homolog (217 aa).

Coiled coils occupy residues 6 to 106 (TIEK…MSKY) and 163 to 188 (KEQE…TRES). The segment at 194-217 (KEDASESTSLSGLVTSSDLSLRKS) is disordered. Residues 199 to 217 (ESTSLSGLVTSSDLSLRKS) are compositionally biased toward polar residues.

It belongs to the SIKE family.

It is found in the cytoplasm. In Gallus gallus (Chicken), this protein is FGFR1 oncogene partner 2 homolog (FGFR1OP2).